The following is a 122-amino-acid chain: Large ribosomal subunit protein uL14 (122 aa).

Belongs to the universal ribosomal protein uL14 family. As to quaternary structure, part of the 50S ribosomal subunit. Forms a cluster with proteins L3 and L19. In the 70S ribosome, L14 and L19 interact and together make contacts with the 16S rRNA in bridges B5 and B8.

Binds to 23S rRNA. Forms part of two intersubunit bridges in the 70S ribosome. This is Large ribosomal subunit protein uL14 from Natranaerobius thermophilus (strain ATCC BAA-1301 / DSM 18059 / JW/NM-WN-LF).